The chain runs to 100 residues: Replication restart protein PriB (100 aa).

Residues 1 to 100 (MTNRIELSGV…VLHADKISQI (100 aa)) form the SSB domain.

It belongs to the PriB family. In terms of assembly, homodimer. Interacts with PriA and DnaT. Component of the replication restart primosome. Primosome assembly occurs via a 'hand-off' mechanism. PriA binds to replication forks, subsequently PriB then DnaT bind; DnaT then displaces ssDNA to generate the helicase loading substrate.

Its function is as follows. Involved in the restart of stalled replication forks, which reloads the replicative helicase on sites other than the origin of replication; the PriA-PriB pathway is the major replication restart pathway. During primosome assembly it facilitates complex formation between PriA and DnaT on DNA; stabilizes PriA on DNA. Stimulates the DNA unwinding activity of PriA helicase. In Vibrio cholerae serotype O1 (strain ATCC 39315 / El Tor Inaba N16961), this protein is Replication restart protein PriB.